The sequence spans 957 residues: MTQTLSQLENSGAFIERHIGPDAAQQQEMLNAVGAQSLNALTGQIVPKDIQLATPPQVGAPATEYAALAELKAIASRNKRFTSYIGMGYTAVQLPPVILRNMLENPGWYTAYTPYQPEVSQGRLEALLNFQQVTLDLTGLDMASASLLDEATAAAEAMAMAKRVSKLKNANRFFVASDVHPQTLDVVRTRAETFGFEVIVDDAQKVLDHQDVFGVLLQQVGTTGEIHDYTALISELKSRKIVVSVAADIMALVLLTAPGKQGADIVFGSAQRFGVPMGYGGPHAAFFAAKDEYKRSMPGRIIGVSKDAAGNTALRMAMQTREQHIRREKANSNICTSQVLLANIASLYAVYHGPVGLKRIANRIHRLTDILAAGLQQKGLKLRHAHYFDTLCVEVADKAGVLARAEAAEINLRSDILNAVGITLDETTTRENVMQLFSVLLGDNHGLDIDTLDKDVAHDSRSIQPAMLRDDEILTHPVFNRYHSETEMMRYMHSLERKDLALNQAMIPLGSCTMKLNAAAEMIPITWPEFAELHPFCPPEQAEGYQQMIAQLADWLVKLTGYDAVCMQPNSGAQGEYAGLLAIRHYHESRNEGHRDICLIPASAHGTNPASAHMAGMQVVVVACDKNGNIDLADLRAKAEQAGDNLSCIMVTYPSTHGVYEETIREVCEVVHQFGGQVYLDGANMNAQVGITSPGFIGADVSHLNLHKTFCIPHGGGGPGMGPIGVKAHLAPFVPGHSVVQIEGMLTRQGAVSAAPFGSASILPISWMYIRMMGAEGLKKASQVAILNANYIASRLQDAFPVLYTGRDGRVAHECILDIRPLKEETGISELDIAKRLIDYGFHAPTMSFPVAGTLMVEPTESESKVELDRFIDAMLAIRSEIDQVKAGVWPLEDNPLVNAPHIQSELVAEWAHPYSREVAVFPAGVADKYWPTVKRLDDVYGDRNLFCSCVPISEYQ.

At K708 the chain carries N6-(pyridoxal phosphate)lysine.

The protein belongs to the GcvP family. In terms of assembly, the glycine cleavage system is composed of four proteins: P, T, L and H. Pyridoxal 5'-phosphate serves as cofactor.

It catalyses the reaction N(6)-[(R)-lipoyl]-L-lysyl-[glycine-cleavage complex H protein] + glycine + H(+) = N(6)-[(R)-S(8)-aminomethyldihydrolipoyl]-L-lysyl-[glycine-cleavage complex H protein] + CO2. Functionally, the glycine cleavage system catalyzes the degradation of glycine. The P protein binds the alpha-amino group of glycine through its pyridoxal phosphate cofactor; CO(2) is released and the remaining methylamine moiety is then transferred to the lipoamide cofactor of the H protein. In Escherichia coli O7:K1 (strain IAI39 / ExPEC), this protein is Glycine dehydrogenase (decarboxylating).